Consider the following 134-residue polypeptide: Interleukin-5 (134 aa).

Residues 1 to 19 form the signal peptide; that stretch reads MRMLLHLSLLALGAAYVYA. Thr22 carries an O-linked (GalNAc...) threonine glycan. 2 N-linked (GlcNAc...) asparagine glycosylation sites follow: Asn47 and Asn90.

The protein belongs to the IL-5 family. In terms of assembly, homodimer; disulfide-linked. Interacts with IL5RA. Interacts with CSF2RB.

It is found in the secreted. Functionally, homodimeric cytokine expressed predominantly by T-lymphocytes and NK cells that plays an important role in the survival, differentiation, and chemotaxis of eosinophils. Also acts on activated and resting B-cells to induce immunoglobulin production, growth, and differentiation. Mechanistically, exerts its biological effects through a receptor composed of IL5RA subunit and the cytokine receptor common subunit beta/CSF2RB. Binding to the receptor leads to activation of various kinases including LYN, SYK and JAK2 and thereby propagates signals through the RAS-MAPK and JAK-STAT5 pathways respectively. The chain is Interleukin-5 (IL5) from Macaca mulatta (Rhesus macaque).